We begin with the raw amino-acid sequence, 360 residues long: Nucleoporin SEH1-A (360 aa).

WD repeat units follow at residues 10-49 (DHKDLIHDVSFDFHGRRMATCSSDQSVKVWDKSENGNWHC), 55-96 (THSG…SNDK), 111-152 (DSRT…NLSQ), 160-210 (SCKL…RKYA), 217-258 (SVSD…KELS), and 276-315 (NHNSQVWRVSWNITGTVLASSGDDGTVRLWKANYMDNWKC).

This sequence belongs to the WD repeat SEC13 family. Component of the Nup107-160 subcomplex of the nuclear pore complex (NPC). The Nup107-160 subcomplex includes NUP160, NUP133, NUP107, NUP98, NUP85, NUP43, NUP37, SEH1 and SEC13. Component of the GATOR2 subcomplex, composed of MIOS, SEC13, SEH1L, WDR24 and WDR59. The GATOR2 complex interacts with CASTOR1 and CASTOR2; the interaction is negatively regulated by arginine. The GATOR2 complex interacts with SESN1, SESN2 and SESN3; the interaction is negatively regulated by amino acids.

Its subcellular location is the chromosome. It is found in the centromere. The protein localises to the kinetochore. The protein resides in the nucleus. It localises to the nuclear pore complex. Its subcellular location is the lysosome membrane. The GATOR2 complex is negatively regulated by the upstream amino acid sensors CASTOR1 and SESN2, which sequester the GATOR2 complex in absence of amino acids. In the presence of abundant amino acids, GATOR2 is released from CASTOR1 and SESN2 and activated. Functionally, component of the Nup107-160 subcomplex of the nuclear pore complex (NPC). The Nup107-160 subcomplex is required for the assembly of a functional NPC. The Nup107-160 subcomplex is also required for normal kinetochore microtubule attachment, mitotic progression and chromosome segregation. This subunit plays a role in recruitment of the Nup107-160 subcomplex to the kinetochore. As a component of the GATOR2 complex, functions as an activator of the amino acid-sensing branch of the mTORC1 signaling pathway. The GATOR2 complex indirectly activates mTORC1 through the inhibition of the GATOR1 subcomplex. GATOR2 probably acts as an E3 ubiquitin-protein ligase toward GATOR1. In the presence of abundant amino acids, the GATOR2 complex mediates ubiquitination of the NPRL2 core component of the GATOR1 complex, leading to GATOR1 inactivation. In the absence of amino acids, GATOR2 is inhibited, activating the GATOR1 complex. This is Nucleoporin SEH1-A (seh1l-a) from Xenopus laevis (African clawed frog).